The primary structure comprises 1255 residues: MENLNRKKAIKIELANPDTIRSWSHGEVLKPETINYKTLKAEKDGLFDERIFGPTKNYECVCGRYKKANPMNKGKKCEKCGVELTESIVRRERMGHIELEEPVTHIWMLKVAPYRIAAILDLKAKELEEVVYFVSHIVLEQGNQKHFVEKEVLDLGSSRITKTREKLQLTILDVIDLINDPNHRDTKKANRLLEELKNTAVPFSIDEATSLISKYTGAKFGIGARAVEYLLEKVDLTKEIEAIKIQLENSKKTPNERTKLLKRLETFDSLKRSKQRPEWMVMRVIPVIPPDIRPIIQLDGGRFTTSEINDLYRRIIIRNERLKKVKEMGAPSIIVNNEKRMLQEAVDALFDNERKPKPVQRKNKRPLKSLTSVLKGKQGRFRQNLLGKRVDYSARSVIAIGPDLKMYQAGLPREMAITLFKPFVIQWLQDHEYAENVKIAEKMLLQNDPKVWEALEQVIKDRPVLLNRAPTLHRLGIQAFEPKLVKGKAIRLHPLVTTAFNADFDGDQMAVHVPITKEAVAESRALMLGSSAILGPKDGKAIVTPGQDIILGNYYLTTEEKNAKGQGMIFSSLDEAFMAYDSGQIHLNSLIGIALSALPEQKFSDKNQRLNSYLLTTVGKLYFNQIFDDNFPWINSNNIWNAKEAVKEFIYYFSQDINNVIENIQVQQPIKKKELSLIIERYFETHGARKTAEMLDKMKDLGFSFSTKSGTTISAGDVVAFTHKYDEFKEADQKVEQITDFYNMGMLTNSEKKRRIIEVWSDVKDKIQDELATVLRKDVKNPIFVMVDSGARGNISNFTQLVGMRGLMNDTKGDIKEIPIKSSFREGLTVSEYFVSTHGARKGMADIALKTADSGYLTRRLVDVSQEIVVVNEDCEPSKGFEVSAIIDTKHDNVIVPLKDRLVGRFTFEDIYDDDKNLVAFANTLIDKNIAEKIIMSGISSVVIRSVLTCDNKRGVCQKCYGLNLATASVVNIGEPVGVIAAQSIGEPGTQLTMRNFHTGGVAGNVDITQGLPRIKELLDVTTPKGAVAIISEVDGVVSEIEDYNGVFVINIVTENEEVKKYKTEFNSVLRVEQGSSVVAGQKLTEGAIDLHQLLEFGGIQDVQNYILKEVQKVYRLQGIEISDKYIEIIIKQMLNKVKITDGGDSDLLPGEVITIQNYKEVVQDCIVKSIRPPLSKAQIFGIKKAPLESSSWLSSASFQDTARVLTRAIIKGKEDKLEGLKENIMLGNLIPAGTGLTGTQEVEQLAEQYHNNEY.

Zn(2+) is bound by residues C60, C62, C77, and C80. Mg(2+) is bound by residues D503, D505, and D507. The Zn(2+) site is built by C875, C950, C957, and C960.

This sequence belongs to the RNA polymerase beta' chain family. As to quaternary structure, the RNAP catalytic core consists of 2 alpha, 1 beta, 1 beta' and 1 omega subunit. When a sigma factor is associated with the core the holoenzyme is formed, which can initiate transcription. It depends on Mg(2+) as a cofactor. Zn(2+) serves as cofactor.

The catalysed reaction is RNA(n) + a ribonucleoside 5'-triphosphate = RNA(n+1) + diphosphate. Its function is as follows. DNA-dependent RNA polymerase catalyzes the transcription of DNA into RNA using the four ribonucleoside triphosphates as substrates. The chain is DNA-directed RNA polymerase subunit beta' from Mycoplasma mycoides subsp. mycoides SC (strain CCUG 32753 / NCTC 10114 / PG1).